Reading from the N-terminus, the 345-residue chain is L-threonine 3-dehydrogenase (345 aa).

Cys39 contributes to the Zn(2+) binding site. Catalysis depends on charge relay system residues Thr41 and His44. Zn(2+) contacts are provided by His64, Glu65, Cys94, Cys97, Cys100, and Cys108. NAD(+)-binding positions include Ile176, Asp196, Arg201, 263 to 265 (LGI), and 287 to 288 (VY).

The protein belongs to the zinc-containing alcohol dehydrogenase family. As to quaternary structure, homotetramer. The cofactor is Zn(2+).

It localises to the cytoplasm. The catalysed reaction is L-threonine + NAD(+) = (2S)-2-amino-3-oxobutanoate + NADH + H(+). The protein operates within amino-acid degradation; L-threonine degradation via oxydo-reductase pathway; glycine from L-threonine: step 1/2. Catalyzes the NAD(+)-dependent oxidation of L-threonine to 2-amino-3-ketobutyrate. This is L-threonine 3-dehydrogenase from Anaeromyxobacter sp. (strain K).